The chain runs to 200 residues: NADH-quinone oxidoreductase subunit B (200 aa).

Positions 78, 79, 144, and 174 each coordinate [4Fe-4S] cluster.

This sequence belongs to the complex I 20 kDa subunit family. In terms of assembly, NDH-1 is composed of 14 different subunits. Subunits NuoB, C, D, E, F, and G constitute the peripheral sector of the complex. It depends on [4Fe-4S] cluster as a cofactor.

The protein localises to the cell membrane. It carries out the reaction a quinone + NADH + 5 H(+)(in) = a quinol + NAD(+) + 4 H(+)(out). Functionally, NDH-1 shuttles electrons from NADH, via FMN and iron-sulfur (Fe-S) centers, to quinones in the respiratory chain. The immediate electron acceptor for the enzyme in this species is believed to be ubiquinone. Couples the redox reaction to proton translocation (for every two electrons transferred, four hydrogen ions are translocated across the cytoplasmic membrane), and thus conserves the redox energy in a proton gradient. This is NADH-quinone oxidoreductase subunit B from Dehalococcoides mccartyi (strain CBDB1).